The following is a 95-amino-acid chain: Cell division topological specificity factor (95 aa).

Belongs to the MinE family.

Functionally, prevents the cell division inhibition by proteins MinC and MinD at internal division sites while permitting inhibition at polar sites. This ensures cell division at the proper site by restricting the formation of a division septum at the midpoint of the long axis of the cell. In Synechococcus sp. (strain CC9902), this protein is Cell division topological specificity factor.